Here is a 406-residue protein sequence, read N- to C-terminus: Peptidase T (406 aa).

H78 contacts Zn(2+). D80 is an active-site residue. D139 provides a ligand contact to Zn(2+). E173 acts as the Proton acceptor in catalysis. Residues E174, D196, and H378 each contribute to the Zn(2+) site.

Belongs to the peptidase M20B family. It depends on Zn(2+) as a cofactor.

It is found in the cytoplasm. It carries out the reaction Release of the N-terminal residue from a tripeptide.. Cleaves the N-terminal amino acid of tripeptides. This chain is Peptidase T, found in Clostridium perfringens (strain ATCC 13124 / DSM 756 / JCM 1290 / NCIMB 6125 / NCTC 8237 / Type A).